The primary structure comprises 123 residues: Small ribosomal subunit protein uS12c (123 aa).

The protein belongs to the universal ribosomal protein uS12 family. Part of the 30S ribosomal subunit.

It localises to the plastid. Its subcellular location is the chloroplast. Functionally, with S4 and S5 plays an important role in translational accuracy. Located at the interface of the 30S and 50S subunits. The protein is Small ribosomal subunit protein uS12c (rps12) of Marchantia polymorpha (Common liverwort).